Here is a 54-residue protein sequence, read N- to C-terminus: Large ribosomal subunit protein bL32c (54 aa).

It belongs to the bacterial ribosomal protein bL32 family.

The protein localises to the plastid. Its subcellular location is the chloroplast. This Cucumis sativus (Cucumber) protein is Large ribosomal subunit protein bL32c.